The primary structure comprises 272 residues: Neurogenin-2 (272 aa).

Positions 30–69 (LTPLSSSADEEEEEEPGASGGARRQRGAEAGQGARGGVAA) are disordered. In terms of domain architecture, bHLH spans 112–164 (TRRLKANNRERNRMHNLNAALDALREVLPTFPEDAKLTKIETLRFAHNYIWAL). Over residues 197–239 (ASAALSSSGDSPSPASTWSCTNSPAPSSSVSSNSTSPYSCTLS) the composition is skewed to low complexity. The interval 197–264 (ASAALSSSGD…PPDKHRYAPH (68 aa)) is disordered.

Efficient DNA binding requires dimerization with another bHLH protein.

It is found in the nucleus. In terms of biological role, transcriptional regulator. Involved in neuronal differentiation. Activates transcription by binding to the E box (5'-CANNTG-3'). This chain is Neurogenin-2 (NEUROG2), found in Homo sapiens (Human).